The following is a 146-amino-acid chain: 3-hydroxyacyl-[acyl-carrier-protein] dehydratase FabZ (146 aa).

Residue His49 is part of the active site.

The protein belongs to the thioester dehydratase family. FabZ subfamily.

The protein resides in the cytoplasm. The catalysed reaction is a (3R)-hydroxyacyl-[ACP] = a (2E)-enoyl-[ACP] + H2O. Its function is as follows. Involved in unsaturated fatty acids biosynthesis. Catalyzes the dehydration of short chain beta-hydroxyacyl-ACPs and long chain saturated and unsaturated beta-hydroxyacyl-ACPs. This chain is 3-hydroxyacyl-[acyl-carrier-protein] dehydratase FabZ, found in Pseudomonas fluorescens (strain Pf0-1).